We begin with the raw amino-acid sequence, 424 residues long: MTNKKAFKEACKFIAGGVNSPVRAFANVQSEPKFISHGKGAYIFDIDGNSYIDYVQSWGPLLFGHCDKDIQKACQKALHKGSSFGAPTLLETELAKLVLSDFPHLEKIRFVSSGTEATMSAIRLARGFTKKDKILKFEGCYHGHSDSLLVSAGSGAATFNSPSSLGVLEDVAKHTLVAKYNDINSVKELFEKNKDIACVIIEPIAGNMGLVPAKQDFLEELAKICKNNQTLLIFDEVMSGYRASYLGSYGINHIQADIITFGKVIGGGLPAAAFASRAEIMDILSPLGGVYQAGTLSGNPLAMAAGIASLTKAKKKTKLYDKLGKLAKKLTQGMKKLADEKGLPLQVCHVGSMFGYFFTKDPVSNYQDALKSDLALFSKFHKNMLENGIYLAPSQFETGFICSKMDDKIIDTTLEAVRESFKRI.

The residue at position 263 (lysine 263) is an N6-(pyridoxal phosphate)lysine.

It belongs to the class-III pyridoxal-phosphate-dependent aminotransferase family. HemL subfamily. As to quaternary structure, homodimer. It depends on pyridoxal 5'-phosphate as a cofactor.

It is found in the cytoplasm. The enzyme catalyses (S)-4-amino-5-oxopentanoate = 5-aminolevulinate. Its pathway is porphyrin-containing compound metabolism; protoporphyrin-IX biosynthesis; 5-aminolevulinate from L-glutamyl-tRNA(Glu): step 2/2. The chain is Glutamate-1-semialdehyde 2,1-aminomutase from Campylobacter jejuni (strain RM1221).